We begin with the raw amino-acid sequence, 902 residues long: Glycogen phosphorylase (902 aa).

The disordered stretch occupies residues 1 to 21 (MPPASTSTTNDMITEEPTSPH). T31 bears the Phosphothreonine mark. S333 is modified (phosphoserine). Residue K751 is modified to N6-(pyridoxal phosphate)lysine.

The protein belongs to the glycogen phosphorylase family. Homodimer. Pyridoxal 5'-phosphate serves as cofactor.

Its subcellular location is the cytoplasm. It localises to the cytosol. It catalyses the reaction [(1-&gt;4)-alpha-D-glucosyl](n) + phosphate = [(1-&gt;4)-alpha-D-glucosyl](n-1) + alpha-D-glucose 1-phosphate. Its activity is regulated as follows. Activated by phosphorylation of Thr-31. Its function is as follows. Phosphorylase is an important allosteric enzyme in carbohydrate metabolism. Enzymes from different sources differ in their regulatory mechanisms and in their natural substrates. However, all known phosphorylases share catalytic and structural properties. The protein is Glycogen phosphorylase (GPH1) of Saccharomyces cerevisiae (strain ATCC 204508 / S288c) (Baker's yeast).